Here is a 681-residue protein sequence, read N- to C-terminus: Serine/threonine-protein kinase PAK 6 (681 aa).

3 disordered regions span residues 1-30 (MFRKKKKKRPEISAPQNFQHRVHTSFDPKE), 200-256 (QSSP…ESSL), and 268-355 (TAAT…PRTW). Positions 12 to 25 (ISAPQNFQHRVHTS) constitute a CRIB domain. The linker stretch occupies residues 26–406 (FDPKEGKFVG…VVDQGDPRLL (381 aa)). 2 stretches are compositionally biased toward low complexity: residues 201–212 (SSPPGASPPTGT) and 268–278 (TAATAPPSSSK). The span at 308–333 (SLPSDQPVGTFSPLTTSDTSSPQKSL) shows a compositional bias: polar residues. Positions 407 to 658 (LDSYVKIGEG…AQELLDHPFL (252 aa)) constitute a Protein kinase domain. Residues 413–421 (IGEGSTGIV) and lysine 436 each bind ATP. Aspartate 526 serves as the catalytic Proton acceptor. A Phosphoserine; by autocatalysis modification is found at serine 560.

This sequence belongs to the protein kinase superfamily. STE Ser/Thr protein kinase family. STE20 subfamily. As to quaternary structure, interacts tightly with GTP-bound but not GDP-bound CDC42/p21 and RAC1. Interacts with the androgen receptor AR. Interacts with IQGAP1 and PPM1B. Post-translationally, autophosphorylated. Phosphorylated by MAP2K6/MAPKK6, leading to PAK6 activation.

It localises to the cytoplasm. The protein localises to the nucleus. The catalysed reaction is L-seryl-[protein] + ATP = O-phospho-L-seryl-[protein] + ADP + H(+). It carries out the reaction L-threonyl-[protein] + ATP = O-phospho-L-threonyl-[protein] + ADP + H(+). Its function is as follows. Serine/threonine protein kinase that plays a role in the regulation of gene transcription. The kinase activity is induced by various effectors including AR or MAP2K6/MAPKK6. Phosphorylates the DNA-binding domain of androgen receptor/AR and thereby inhibits AR-mediated transcription. Also inhibits ESR1-mediated transcription. May play a role in cytoskeleton regulation by interacting with IQGAP1. May protect cells from apoptosis through phosphorylation of BAD. This Pongo abelii (Sumatran orangutan) protein is Serine/threonine-protein kinase PAK 6 (PAK6).